Here is a 538-residue protein sequence, read N- to C-terminus: Bifunctional purine biosynthesis protein PurH (538 aa).

In terms of domain architecture, MGS-like spans 6 to 158 (KHIPAPDLHR…KNHAYVATVV (153 aa)).

Belongs to the PurH family.

The catalysed reaction is (6R)-10-formyltetrahydrofolate + 5-amino-1-(5-phospho-beta-D-ribosyl)imidazole-4-carboxamide = 5-formamido-1-(5-phospho-D-ribosyl)imidazole-4-carboxamide + (6S)-5,6,7,8-tetrahydrofolate. It catalyses the reaction IMP + H2O = 5-formamido-1-(5-phospho-D-ribosyl)imidazole-4-carboxamide. The protein operates within purine metabolism; IMP biosynthesis via de novo pathway; 5-formamido-1-(5-phospho-D-ribosyl)imidazole-4-carboxamide from 5-amino-1-(5-phospho-D-ribosyl)imidazole-4-carboxamide (10-formyl THF route): step 1/1. Its pathway is purine metabolism; IMP biosynthesis via de novo pathway; IMP from 5-formamido-1-(5-phospho-D-ribosyl)imidazole-4-carboxamide: step 1/1. This chain is Bifunctional purine biosynthesis protein PurH, found in Brucella anthropi (strain ATCC 49188 / DSM 6882 / CCUG 24695 / JCM 21032 / LMG 3331 / NBRC 15819 / NCTC 12168 / Alc 37) (Ochrobactrum anthropi).